The following is a 224-amino-acid chain: ATP synthase subunit a (224 aa).

6 helical membrane-spanning segments follow: residues 17 to 37 (LSLNWLSTFLGLLMIPSIYWL), 72 to 92 (IFISLFSLILFNNFMGLFPYI), 99 to 119 (LTLTLSLALPLWLCFMLYGWI), 125 to 145 (MFAHLVPQGTPAILMPFMVCI), 155 to 175 (GTLAVRLTANMIAGHLLLTLL), and 184 to 204 (YLLVTFLLVAQIALLVLESAV).

It belongs to the ATPase A chain family. F-type ATPases have 2 components, CF(1) - the catalytic core - and CF(0) - the membrane proton channel. CF(1) has five subunits: alpha(3), beta(3), gamma(1), delta(1), epsilon(1). CF(0) has three main subunits: a, b and c.

It localises to the mitochondrion inner membrane. Functionally, mitochondrial membrane ATP synthase (F(1)F(0) ATP synthase or Complex V) produces ATP from ADP in the presence of a proton gradient across the membrane which is generated by electron transport complexes of the respiratory chain. F-type ATPases consist of two structural domains, F(1) - containing the extramembraneous catalytic core and F(0) - containing the membrane proton channel, linked together by a central stalk and a peripheral stalk. During catalysis, ATP synthesis in the catalytic domain of F(1) is coupled via a rotary mechanism of the central stalk subunits to proton translocation. Key component of the proton channel; it may play a direct role in the translocation of protons across the membrane. In Drosophila yakuba (Fruit fly), this protein is ATP synthase subunit a (mt:ATPase6).